A 198-amino-acid polypeptide reads, in one-letter code: Segregation and condensation protein B (198 aa).

This sequence belongs to the ScpB family. Homodimer. Homodimerization may be required to stabilize the binding of ScpA to the Smc head domains. Component of a cohesin-like complex composed of ScpA, ScpB and the Smc homodimer, in which ScpA and ScpB bind to the head domain of Smc. The presence of the three proteins is required for the association of the complex with DNA.

The protein localises to the cytoplasm. Functionally, participates in chromosomal partition during cell division. May act via the formation of a condensin-like complex containing Smc and ScpA that pull DNA away from mid-cell into both cell halves. This Streptococcus mutans serotype c (strain ATCC 700610 / UA159) protein is Segregation and condensation protein B.